The sequence spans 5099 residues: Malformin synthetase mlfA (5099 aa).

Positions 224 to 615 are adenylation 1; that stretch reads QRHAADRPHS…CGRADTQVKL (392 aa). Positions 756–829 constitute a Carrier 1 domain; it reads THLENEIQLA…EAASLAKVRD (74 aa). Serine 790 carries the O-(pantetheine 4'-phosphoryl)serine modification. The tract at residues 867–1297 is condensation 1; the sequence is EDVFPCTSMQ…PVDSLTLLKP (431 aa). Residues 1325–1717 form an adenylation 2 region; that stretch reads DRWVNRQPDT…GRKDTQVKLR (393 aa). The Carrier 2 domain maps to 1857–1934; that stretch reads ARAPELERTL…QIATQCEGIA (78 aa). Serine 1894 bears the O-(pantetheine 4'-phosphoryl)serine mark. The interval 1995–2040 is disordered; it reads MQQESSSSPAPSVSSSSSSSSAPKPLLAQPEPPTNLRDSVPEPFSL. Positions 1999 to 2017 are enriched in low complexity; it reads SSSSPAPSVSSSSSSSSAP. Positions 2067-2482 are condensation 2; sequence EDIYPATPLQ…ALSPGDKKVL (416 aa). The segment at 2505–2897 is adenylation 3; the sequence is LSTPHAPAVC…VGRKDGQLKL (393 aa). Residues 3032-3108 form the Carrier 3 domain; sequence RPATAQERGL…RLVLHLQNTS (77 aa). The residue at position 3069 (serine 3069) is an O-(pantetheine 4'-phosphoryl)serine. 2 condensation regions span residues 3125 to 3589 and 3610 to 4033; these read WVHL…TYDQ and DIYP…QQAM. The tract at residues 4058–4446 is adenylation 4; it reads YANREAVCAW…VGRKDSQIKF (389 aa). One can recognise a Carrier 4 domain in the interval 4581-4657; it reads PPSTGMQQGI…DLAEHISSRV (77 aa). Serine 4618 is modified (O-(pantetheine 4'-phosphoryl)serine). Residues 4696 to 5017 form a condensation 5 region; the sequence is DILPTTGFQR…LQTVVQHQNV (322 aa).

Belongs to the NRP synthetase family.

It functions in the pathway secondary metabolite biosynthesis. Nonribosomal peptide synthetase; part of the gene cluster that mediates the biosynthesis of malformins, cyclic pentapeptides with a disulfide bond between 2 consecutive cysteins, that show potential anti-tumor as well as antimalarial and antitrypanosomal properties. The nonribosomal peptide synthetase mlfA is responsible of the formation of the cyclic pentapeptide. The malformin biosynthesis clusters in malformin-producing fungi also contain enzymes involved in the formation of the disulfide bond between the two consecutive cysteins within malformins, in addition to additional tailoring enzymes such as methyltransferases or oxidoreductases. They are also composed of up to 4 major facilitator superfamily transporters, and transcription factors probably involved in the regulation of the expression of those clusters. The chain is Malformin synthetase mlfA from Aspergillus sclerotiicarbonarius (strain CBS 121057 / IBT 28362).